The primary structure comprises 393 residues: Aspartate aminotransferase (393 aa).

Residues Gly38, Trp124, and Asn174 each contribute to the L-aspartate site. Lys237 is modified (N6-(pyridoxal phosphate)lysine).

Belongs to the class-I pyridoxal-phosphate-dependent aminotransferase family. In terms of assembly, homodimer. The cofactor is pyridoxal 5'-phosphate.

It is found in the cytoplasm. It carries out the reaction L-aspartate + 2-oxoglutarate = oxaloacetate + L-glutamate. The polypeptide is Aspartate aminotransferase (aspC) (Geobacillus stearothermophilus (Bacillus stearothermophilus)).